We begin with the raw amino-acid sequence, 88 residues long: Elongation factor 1-beta (88 aa).

This sequence belongs to the EF-1-beta/EF-1-delta family.

Its function is as follows. Promotes the exchange of GDP for GTP in EF-1-alpha/GDP, thus allowing the regeneration of EF-1-alpha/GTP that could then be used to form the ternary complex EF-1-alpha/GTP/AAtRNA. The protein is Elongation factor 1-beta of Halobacterium salinarum (strain ATCC 29341 / DSM 671 / R1).